A 181-amino-acid polypeptide reads, in one-letter code: Ribulose bisphosphate carboxylase small subunit, chloroplastic 2 (181 aa).

The N-terminal 57 residues, 1–57 (MASSVISSAAVATRTNVTQAGSMIAPFTGLKSAATFPVSRKQNLDITSIASNGGRVR), are a transit peptide targeting the chloroplast.

It belongs to the RuBisCO small chain family. Heterohexadecamer of 8 large and 8 small subunits.

Its subcellular location is the plastid. The protein resides in the chloroplast. Functionally, ruBisCO catalyzes two reactions: the carboxylation of D-ribulose 1,5-bisphosphate, the primary event in carbon dioxide fixation, as well as the oxidative fragmentation of the pentose substrate. Both reactions occur simultaneously and in competition at the same active site. Although the small subunit is not catalytic it is essential for maximal activity. The chain is Ribulose bisphosphate carboxylase small subunit, chloroplastic 2 from Solanum tuberosum (Potato).